A 469-amino-acid chain; its full sequence is MEAQTLYEKLWSSHVVHQEADGTALIYIDRHLVHEVTSPQAFEGLKLAGRKPWRISSIVATADHNIPTDHWEMGIQDPVSRQQVETLDANIREVGSLAYFPFKDQRQGIIHVIGPENGTTLPGMTVVCGDSHTSTHGAFACLAHGIGTSEVEHVMATQCLLQKKSKTMLIKVEGTLGRGVTAKDVVLAIIGRIGTAGGTGYAIEFGGSAIRSLSMEGRMTVCNMAIEAGARAGLVAVDETTIDYLKDKPFAPKGPQWDAAVAYWRTLKSDDGATFDTVVELDATSILPQVTWGTSPEMVTTVDGRVPDPAAIADPVKREGVERALKYMGLAPNTPISEIAVDQVFIGSCTNSRIEDLREAAAVVKGRSKAASVRRVLVVPGSGLVKHQAEAEGLDKVFIEAGFEWREPGCSMCLAMNADRLEPGERCASTSNRNFEGRQGAGGRTHLVSPAMAAAAAVTGHFTDVRTLN.

Cys-349, Cys-410, and Cys-413 together coordinate [4Fe-4S] cluster.

This sequence belongs to the aconitase/IPM isomerase family. LeuC type 1 subfamily. As to quaternary structure, heterodimer of LeuC and LeuD. [4Fe-4S] cluster serves as cofactor.

The enzyme catalyses (2R,3S)-3-isopropylmalate = (2S)-2-isopropylmalate. It participates in amino-acid biosynthesis; L-leucine biosynthesis; L-leucine from 3-methyl-2-oxobutanoate: step 2/4. Catalyzes the isomerization between 2-isopropylmalate and 3-isopropylmalate, via the formation of 2-isopropylmaleate. This Azoarcus sp. (strain BH72) protein is 3-isopropylmalate dehydratase large subunit.